The sequence spans 150 residues: MRKVMAAKLHGIHVTAADLDYHGSITLDPDHCEKAGLLPLEFVDIWNKNSGARISTYVIFGERYSRCCILNGAAARTCQVGDEIIICSSHYIEAERIADFQPKILTFDKGNHIVETLSYVVERDGTGRYHFDIVNEGGQSLPIPVKAHGR.

The active-site Schiff-base intermediate with substrate; via pyruvic acid is the serine 24. At serine 24 the chain carries Pyruvic acid (Ser). Position 56 (threonine 56) interacts with substrate. Residue tyrosine 57 is the Proton donor of the active site. 72 to 74 (GAA) is a binding site for substrate.

The protein belongs to the PanD family. In terms of assembly, heterooctamer of four alpha and four beta subunits. Requires pyruvate as cofactor. Is synthesized initially as an inactive proenzyme, which is activated by self-cleavage at a specific serine bond to produce a beta-subunit with a hydroxyl group at its C-terminus and an alpha-subunit with a pyruvoyl group at its N-terminus.

It is found in the cytoplasm. It catalyses the reaction L-aspartate + H(+) = beta-alanine + CO2. It participates in cofactor biosynthesis; (R)-pantothenate biosynthesis; beta-alanine from L-aspartate: step 1/1. Its function is as follows. Catalyzes the pyruvoyl-dependent decarboxylation of aspartate to produce beta-alanine. The sequence is that of Aspartate 1-decarboxylase from Beijerinckia indica subsp. indica (strain ATCC 9039 / DSM 1715 / NCIMB 8712).